The following is a 177-amino-acid chain: Large ribosomal subunit protein uL6 (177 aa).

The protein belongs to the universal ribosomal protein uL6 family. In terms of assembly, part of the 50S ribosomal subunit.

This protein binds to the 23S rRNA, and is important in its secondary structure. It is located near the subunit interface in the base of the L7/L12 stalk, and near the tRNA binding site of the peptidyltransferase center. This chain is Large ribosomal subunit protein uL6, found in Mannheimia succiniciproducens (strain KCTC 0769BP / MBEL55E).